A 54-amino-acid chain; its full sequence is MKLLGLLLLVFTFMALAFADEKDCIARGQKCVGENKPCCKGTTCMYYANRCVGV.

The first 19 residues, 1–19 (MKLLGLLLLVFTFMALAFA), serve as a signal peptide directing secretion. 3 cysteine pairs are disulfide-bonded: Cys24/Cys39, Cys31/Cys44, and Cys38/Cys51.

The protein belongs to the venom Ptu1-like knottin family. Expressed by the venom gland (posterior main gland) (at protein level).

The protein resides in the secreted. Functionally, binds reversibly and blocks P/Q-type voltage-gated calcium channels (Cav). The sequence is that of U-reduvitoxin-Pr1a from Platymeris rhadamanthus (Red spot assassin bug).